Reading from the N-terminus, the 222-residue chain is 2-C-methyl-D-erythritol 4-phosphate cytidylyltransferase (222 aa).

Belongs to the IspD/TarI cytidylyltransferase family. IspD subfamily.

It catalyses the reaction 2-C-methyl-D-erythritol 4-phosphate + CTP + H(+) = 4-CDP-2-C-methyl-D-erythritol + diphosphate. It functions in the pathway isoprenoid biosynthesis; isopentenyl diphosphate biosynthesis via DXP pathway; isopentenyl diphosphate from 1-deoxy-D-xylulose 5-phosphate: step 2/6. Catalyzes the formation of 4-diphosphocytidyl-2-C-methyl-D-erythritol from CTP and 2-C-methyl-D-erythritol 4-phosphate (MEP). The polypeptide is 2-C-methyl-D-erythritol 4-phosphate cytidylyltransferase (Thermotoga neapolitana (strain ATCC 49049 / DSM 4359 / NBRC 107923 / NS-E)).